A 447-amino-acid chain; its full sequence is Tubulin beta chain (447 aa).

Positions 11, 69, 138, 142, 143, 144, 204, and 226 each coordinate GTP. Position 69 (glutamate 69) interacts with Mg(2+). Positions 425–447 are disordered; the sequence is YQEASISEGEEEYDEEAPLEAEE. Residues 432 to 447 show a composition bias toward acidic residues; the sequence is EGEEEYDEEAPLEAEE.

It belongs to the tubulin family. As to quaternary structure, dimer of alpha and beta chains. A typical microtubule is a hollow water-filled tube with an outer diameter of 25 nm and an inner diameter of 15 nM. Alpha-beta heterodimers associate head-to-tail to form protofilaments running lengthwise along the microtubule wall with the beta-tubulin subunit facing the microtubule plus end conferring a structural polarity. Microtubules usually have 13 protofilaments but different protofilament numbers can be found in some organisms and specialized cells. It depends on Mg(2+) as a cofactor.

It localises to the cytoplasm. The protein resides in the cytoskeleton. In terms of biological role, tubulin is the major constituent of microtubules, a cylinder consisting of laterally associated linear protofilaments composed of alpha- and beta-tubulin heterodimers. Microtubules grow by the addition of GTP-tubulin dimers to the microtubule end, where a stabilizing cap forms. Below the cap, tubulin dimers are in GDP-bound state, owing to GTPase activity of alpha-tubulin. The chain is Tubulin beta chain (tubB) from Phaeosphaeria nodorum (strain SN15 / ATCC MYA-4574 / FGSC 10173) (Glume blotch fungus).